Reading from the N-terminus, the 223-residue chain is UPF0173 metal-dependent hydrolase Amet_4625 (223 aa).

Belongs to the UPF0173 family.

The protein is UPF0173 metal-dependent hydrolase Amet_4625 of Alkaliphilus metalliredigens (strain QYMF).